The following is a 377-amino-acid chain: MLEGEKMENKKKKVLVFGATGNIGFSSLEIIEKENYELVGFSFNNNYEKALEIINRFPNALVFSPSVKTKNTVNSFEELLEKTNPDIILNALVGFSGLHITLLALKNNVDLALANKESLVVAGWLIEDLKRSSSSRIYPVDSEHSSLYDSLKNNNKEIKELIITCSGGPFYKKEFNELLNINFADAVKHPNWNMGKKISIDSATMMNKCFEIIEAYYLFNTKKIKVYQHGQSIIHSMIKFTDNSYIANMSVPDMKLSIQQGLSGYESKTNLINDLSFNNLNLTFSEIDLDKWKPIHWAYDFLENQNRAIPIIMNAANEEAIVLFEENKIKFLDIFEIIEKAIIALENTEVNDLKDILNLNKNTRKYVYDFSKNKFRY.

NADPH is bound by residues T20, G21, I23, N46, and N115. 1-deoxy-D-xylulose 5-phosphate is bound at residue K116. Position 117 (E117) interacts with NADPH. Position 141 (D141) interacts with Mn(2+). 1-deoxy-D-xylulose 5-phosphate is bound by residues S142, E143, S166, and H189. E143 serves as a coordination point for Mn(2+). G195 contacts NADPH. 1-deoxy-D-xylulose 5-phosphate is bound by residues S202, N207, K208, and E211. A Mn(2+)-binding site is contributed by E211.

Belongs to the DXR family. The cofactor is Mg(2+). Mn(2+) is required as a cofactor.

The catalysed reaction is 2-C-methyl-D-erythritol 4-phosphate + NADP(+) = 1-deoxy-D-xylulose 5-phosphate + NADPH + H(+). Its pathway is isoprenoid biosynthesis; isopentenyl diphosphate biosynthesis via DXP pathway; isopentenyl diphosphate from 1-deoxy-D-xylulose 5-phosphate: step 1/6. In terms of biological role, catalyzes the NADPH-dependent rearrangement and reduction of 1-deoxy-D-xylulose-5-phosphate (DXP) to 2-C-methyl-D-erythritol 4-phosphate (MEP). The chain is 1-deoxy-D-xylulose 5-phosphate reductoisomerase from Malacoplasma penetrans (strain HF-2) (Mycoplasma penetrans).